The sequence spans 273 residues: Putative expansin-B2 (273 aa).

The first 29 residues, 1–29 (MTILVVDRYYMLMNLLFALTCLLLNLTHC), serve as a signal peptide directing secretion. Asn-36 is a glycosylation site (N-linked (GlcNAc...) asparagine). The Expansin-like EG45 domain occupies 65-173 (GGACGYGNAV…KKVECNYIGK (109 aa)). Disulfide bonds link Cys-68–Cys-97, Cys-100–Cys-168, and Cys-105–Cys-111. Positions 186–269 (NSFAVLVAYV…NWQPGAIYKS (84 aa)) constitute an Expansin-like CBD domain.

It belongs to the expansin family. Expansin B subfamily.

The protein resides in the secreted. It is found in the cell wall. The protein localises to the membrane. Functionally, may cause loosening and extension of plant cell walls by disrupting non-covalent bonding between cellulose microfibrils and matrix glucans. No enzymatic activity has been found. The chain is Putative expansin-B2 (EXPB2) from Arabidopsis thaliana (Mouse-ear cress).